The chain runs to 314 residues: R2-like ligand binding oxidase (314 aa).

Mn(2+) is bound by residues Glu-68, Glu-101, and His-104. The 3-(O4'-tyrosyl)-valine (Val-Tyr) cross-link spans 71–162 (VTEDIQPFMS…AAQVRASVTY (92 aa)). Glu-101 contacts Fe cation. Fe cation is bound by residues Glu-167, Glu-202, and His-205.

The protein belongs to the ribonucleoside diphosphate reductase small chain family. R2-like ligand binding oxidase subfamily. As to quaternary structure, homodimer. It depends on Fe cation as a cofactor. The cofactor is Mn(2+).

Functionally, probable oxidase that might be involved in lipid metabolism. The protein is R2-like ligand binding oxidase of Mycobacterium tuberculosis (strain ATCC 25177 / H37Ra).